Here is a 229-residue protein sequence, read N- to C-terminus: Dephospho-CoA kinase (229 aa).

The DPCK domain occupies 3–203; it reads TVGLTGGIGS…ARRDAKATAK (201 aa). Residue 11 to 16 coordinates ATP; the sequence is GSGKSA. Positions 203–229 are disordered; the sequence is KATAKAETVASGTDTAASGTDTAAPAG.

It belongs to the CoaE family.

The protein localises to the cytoplasm. It catalyses the reaction 3'-dephospho-CoA + ATP = ADP + CoA + H(+). It participates in cofactor biosynthesis; coenzyme A biosynthesis; CoA from (R)-pantothenate: step 5/5. Catalyzes the phosphorylation of the 3'-hydroxyl group of dephosphocoenzyme A to form coenzyme A. The sequence is that of Dephospho-CoA kinase from Frankia casuarinae (strain DSM 45818 / CECT 9043 / HFP020203 / CcI3).